Reading from the N-terminus, the 202-residue chain is N-(5'-phosphoribosyl)anthranilate isomerase (202 aa).

The protein belongs to the TrpF family.

The enzyme catalyses N-(5-phospho-beta-D-ribosyl)anthranilate = 1-(2-carboxyphenylamino)-1-deoxy-D-ribulose 5-phosphate. The protein operates within amino-acid biosynthesis; L-tryptophan biosynthesis; L-tryptophan from chorismate: step 3/5. This Geobacter metallireducens (strain ATCC 53774 / DSM 7210 / GS-15) protein is N-(5'-phosphoribosyl)anthranilate isomerase.